Consider the following 430-residue polypeptide: Adenylosuccinate synthetase (430 aa).

Residues 13 to 19 (GDEGKGK) and 41 to 43 (GHT) contribute to the GTP site. The Proton acceptor role is filled by Asp14. Positions 14 and 41 each coordinate Mg(2+). IMP-binding positions include 14–17 (DEGK), 39–42 (NAGH), Thr130, Arg144, Gln225, Thr240, and Arg304. Catalysis depends on His42, which acts as the Proton donor. Residue 300–306 (STTGRAR) participates in substrate binding. GTP contacts are provided by residues Arg306, 332 to 334 (KLD), and 414 to 416 (STG).

The protein belongs to the adenylosuccinate synthetase family. As to quaternary structure, homodimer. It depends on Mg(2+) as a cofactor.

Its subcellular location is the cytoplasm. It carries out the reaction IMP + L-aspartate + GTP = N(6)-(1,2-dicarboxyethyl)-AMP + GDP + phosphate + 2 H(+). It functions in the pathway purine metabolism; AMP biosynthesis via de novo pathway; AMP from IMP: step 1/2. Plays an important role in the de novo pathway of purine nucleotide biosynthesis. Catalyzes the first committed step in the biosynthesis of AMP from IMP. In Azotobacter vinelandii (strain DJ / ATCC BAA-1303), this protein is Adenylosuccinate synthetase.